Here is a 2885-residue protein sequence, read N- to C-terminus: Chromodomain-helicase-DNA-binding protein 9 (2885 aa).

Residues 173–195 (QCSSLHSQQSRSNLNPGQNSLGQ) form a disordered region. Lys-197 participates in a covalent cross-link: Glycyl lysine isopeptide (Lys-Gly) (interchain with G-Cter in SUMO2). Disordered regions lie at residues 242-263 (CSSH…CSVS), 283-347 (SLLQ…QGNY), and 479-677 (CLQR…QPLQ). Composition is skewed to polar residues over residues 243–263 (SSHQ…CSVS) and 283–310 (SLLQ…NSFS). The segment covering 323 to 334 (LLNPTPSLNSNN) has biased composition (low complexity). Composition is skewed to polar residues over residues 335–347 (FQIL…QGNY) and 483–505 (QPPS…TQVR). Lys-498 is modified (N6-acetyllysine). Composition is skewed to basic and acidic residues over residues 507 to 526 (MSEK…EKAN) and 534 to 544 (ARAKERGERNI). Ser-549 is subject to Phosphoserine. Residues 572–592 (KPKDRDNKKPKTYSKLKEKTK) are compositionally biased toward basic and acidic residues. Lys-595 participates in a covalent cross-link: Glycyl lysine isopeptide (Lys-Gly) (interchain with G-Cter in SUMO2). Ser-610 carries the phosphoserine modification. Positions 617-630 (AEQRSQHTFKEQHS) are enriched in basic and acidic residues. The span at 631–643 (QKRRSNRQIKRKK) shows a compositional bias: basic residues. The span at 644–659 (YAEDAEGKQSEEEVKG) shows a compositional bias: basic and acidic residues. 2 consecutive Chromo domains span residues 689–760 (AIVD…HFLA) and 772–838 (VEVD…HLDR). The short motif at 867-871 (LNWLL) is the LXXLL motif 1 element. A Helicase ATP-binding domain is found at 871 to 1045 (LFNWYNRRNC…FSLLHFLEPL (175 aa)). ATP is bound at residue 884 to 891 (DEMGLGKT). The DEAH box signature appears at 996–999 (DEAH). The LXXLL motif 2 motif lies at 1035 to 1039 (LFSLL). The Helicase C-terminal domain maps to 1185 to 1336 (LIDKLLPKMK…KAVLQSMSGR (152 aa)). The interval 1460 to 1484 (KDELAELSEAESEGEEKPKLRRPCD) is disordered. Residues 1464-1473 (AELSEAESEG) show a composition bias toward acidic residues. Ser-1467 and Ser-1471 each carry phosphoserine. The span at 1474–1484 (EEKPKLRRPCD) shows a compositional bias: basic and acidic residues. Glycyl lysine isopeptide (Lys-Gly) (interchain with G-Cter in SUMO2) cross-links involve residues Lys-1587, Lys-1737, and Lys-1902. Phosphoserine is present on Ser-2025. Positions 2030–2034 (LPRLL) match the LXXLL motif 3 motif. Residue Lys-2037 forms a Glycyl lysine isopeptide (Lys-Gly) (interchain with G-Cter in SUMO2) linkage. The disordered stretch occupies residues 2046 to 2238 (VKSESLTEEP…TQDSFQANNG (193 aa)). Phosphoserine occurs at positions 2057 and 2058. A Glycyl lysine isopeptide (Lys-Gly) (interchain with G-Cter in SUMO2) cross-link involves residue Lys-2073. Phosphoserine is present on residues Ser-2074 and Ser-2078. Polar residues predominate over residues 2083–2092 (VLSQATGDQK). Basic and acidic residues predominate over residues 2093–2103 (SGGKSETDRRM). The span at 2127-2193 (SQSSSDSDSD…SSSSSSSSSS (67 aa)) shows a compositional bias: low complexity. Basic and acidic residues predominate over residues 2201 to 2215 (DVQKREGTPHRKAYD). Residues 2220-2238 (ASLSTTQDETQDSFQANNG) are compositionally biased toward polar residues. Residues 2331 to 2471 (QMSKVKKHVR…LSYPQPQRIP (141 aa)) are binds A/T-rich DNA. Residues Lys-2349, Lys-2355, and Lys-2360 each participate in a glycyl lysine isopeptide (Lys-Gly) (interchain with G-Cter in SUMO2) cross-link. The interval 2428–2435 (KKRRGRRR) is a.T hook-like. A disordered region spans residues 2473 to 2494 (TESPVPVINLKDGTRLAGDDAP). A compositionally biased stretch (basic and acidic residues) spans 2484–2494 (DGTRLAGDDAP). Residues 2710–2714 (LPNLL) carry the LXXLL motif 4 motif. A disordered region spans residues 2724 to 2770 (AESGAEEKRGNDSKELEGKKERTESQSPENGGERCVPGSPSTSSTAA). Residues 2728–2747 (AEEKRGNDSKELEGKKERTE) are compositionally biased toward basic and acidic residues. The LXXLL motif 5 signature appears at 2782–2786 (LNPLL). Positions 2818–2847 (KNKSDDLDSSKSVEIKEENSRVRDQEEKGG) are enriched in basic and acidic residues. Positions 2818 to 2885 (KNKSDDLDSS…SEDSDSSNED (68 aa)) are disordered. Residue Lys-2833 forms a Glycyl lysine isopeptide (Lys-Gly) (interchain with G-Cter in SUMO2) linkage. Positions 2864-2876 (RASSGSDSSSSSS) are enriched in low complexity.

Belongs to the SNF2/RAD54 helicase family. Interacts with PPARA. Probably interacts with ESR1 and NR1I3. Phosphorylated on serine and tyrosine residues. Expressed in osteoprogenitor cells during development and in mature bone (at protein level).

It is found in the cytoplasm. It localises to the nucleus. The catalysed reaction is ATP + H2O = ADP + phosphate + H(+). Functionally, probable ATP-dependent chromatin-remodeling factor. Acts as a transcriptional coactivator for PPARA and possibly other nuclear receptors. Has DNA-dependent ATPase activity and binds to A/T-rich DNA. Associates with A/T-rich regulatory regions in promoters of genes that participate in the differentiation of progenitors during osteogenesis. This chain is Chromodomain-helicase-DNA-binding protein 9 (Chd9), found in Mus musculus (Mouse).